Reading from the N-terminus, the 159-residue chain is Transcription elongation factor GreA (159 aa).

Positions 1 to 76 form a coiled coil; sequence MAEEKEVVLT…SLEKTLKKAR (76 aa).

Belongs to the GreA/GreB family.

Functionally, necessary for efficient RNA polymerase transcription elongation past template-encoded arresting sites. The arresting sites in DNA have the property of trapping a certain fraction of elongating RNA polymerases that pass through, resulting in locked ternary complexes. Cleavage of the nascent transcript by cleavage factors such as GreA or GreB allows the resumption of elongation from the new 3'terminus. GreA releases sequences of 2 to 3 nucleotides. In Syntrophomonas wolfei subsp. wolfei (strain DSM 2245B / Goettingen), this protein is Transcription elongation factor GreA.